The sequence spans 1071 residues: Intracellular phospholipase A2 (1071 aa).

The segment at 1–22 is disordered; it reads MTTTNKDGPFRQQYLPGVHKEP. ANK repeat units follow at residues 411-440, 479-508, 510-539, 544-570, 578-610, 614-651, and 652-681; these read ENCYPVHLALTMDRQKIVERLLELDPTLFC, DGQSPLNEAVSTAKPLVATFLIGKGAKFTR, DRNELFVAMTSKNAQSVVEVVLTDKPEIAN, LGNSAIHVALYKESLNALLNRKVELGL, AGETALLLFITTRKPDLLPLLVTLYAHGANMNA, HGNTALHKSAALVDAKKISLECVKFLISAGSNPNKINL, and RGESPRHLAASLQNQEMLAILKAAGATRCP. Residues 748–921 form the PNPLA domain; it reads ISMDGGGIRG…ISNNPALDLM (174 aa). The short motif at 752–757 is the GXGXXG element; the sequence is GGGIRG. The GXSXG signature appears at 784–788; sequence GTSTG. Catalysis depends on Ser786, which acts as the Nucleophile. Residue Asp908 is the Proton acceptor of the active site. A DGA/G motif is present at residues 908–910; it reads DGG.

The protein belongs to the patatin family.

It carries out the reaction a 1,2-diacyl-sn-glycero-3-phosphocholine + H2O = a 1-acyl-sn-glycero-3-phosphocholine + a fatty acid + H(+). In terms of biological role, phospholipase that plays a critical role during oogenesis, ovulation, and/or embryogenesis. The sequence is that of Intracellular phospholipase A2 from Caenorhabditis elegans.